A 548-amino-acid chain; its full sequence is Solute carrier family 22 member 7 (548 aa).

12 consecutive transmembrane segments (helical) span residues 21-41 (VALL…PIFL), 146-166 (AAST…GYLS), 180-200 (VSTL…MFAI), 204-224 (LTGS…LEWL), 234-254 (VLSS…GYLI), 259-279 (WLLL…WWVP), 346-366 (ISLC…GLSL), 376-397 (YQTQ…YLSV), 404-423 (LTQA…RLLV), 432-452 (TVLA…AYLF), 466-486 (MGLT…AALL), and 493-513 (LPKL…LLLP). Residues 522 to 548 (ETIQDVERKSAPTSLQEEEMPMKQVQN) are disordered.

It belongs to the major facilitator (TC 2.A.1) superfamily. Organic cation transporter (TC 2.A.1.19) family.

The protein resides in the basolateral cell membrane. The protein localises to the apical cell membrane. It localises to the cell membrane. The catalysed reaction is orotate(out) + L-glutamate(in) = orotate(in) + L-glutamate(out). It carries out the reaction 3',5'-cyclic GMP(in) = 3',5'-cyclic GMP(out). It catalyses the reaction GMP(in) = GMP(out). The enzyme catalyses 2'-deoxyguanosine(in) = 2'-deoxyguanosine(out). The catalysed reaction is GDP(in) = GDP(out). It carries out the reaction guanosine(in) = guanosine(out). It catalyses the reaction GTP(in) = GTP(out). The enzyme catalyses 3',5'-cyclic AMP(in) = 3',5'-cyclic AMP(out). The catalysed reaction is creatinine(in) = creatinine(out). It carries out the reaction prostaglandin E2(out) = prostaglandin E2(in). It catalyses the reaction 2-oxoglutarate(in) = 2-oxoglutarate(out). The enzyme catalyses glutarate(in) = glutarate(out). The catalysed reaction is urate(out) = urate(in). It carries out the reaction estrone 3-sulfate(out) = estrone 3-sulfate(in). Functions as a Na(+)-independent bidirectional multispecific transporter. Contributes to the renal and hepatic elimination of endogenous organic compounds from the systemic circulation into the urine and bile, respectively. Capable of transporting a wide range of purine and pyrimidine nucleobases, nucleosides and nucleotides, with cGMP, 2'deoxyguanosine and GMP being the preferred substrates. Functions as a pH- and chloride-independent cGMP bidirectional facilitative transporter that can regulate both intracellular and extracellular levels of cGMP and may be involved in cGMP signaling pathways. Mediates orotate/glutamate bidirectional exchange and most likely display a physiological role in hepatic release of glutamate into the blood. Involved in renal secretion and possible reabsorption of creatinine. Able to uptake prostaglandin E2 (PGE2) and may contribute to PGE2 renal excretion. Also transports alpha-ketoglutarate and urate. Apart from the orotate/glutamate exchange, the counterions for the uptake of other SLC22A7/OAT2 substrates remain to be identified. The chain is Solute carrier family 22 member 7 (SLC22A7) from Pongo abelii (Sumatran orangutan).